The chain runs to 203 residues: Thymidylate kinase (203 aa).

7–14 (GPDGSGKS) is an ATP binding site.

This sequence belongs to the thymidylate kinase family.

The catalysed reaction is dTMP + ATP = dTDP + ADP. Its function is as follows. Phosphorylation of dTMP to form dTDP in both de novo and salvage pathways of dTTP synthesis. The sequence is that of Thymidylate kinase from Finegoldia magna (strain ATCC 29328 / DSM 20472 / WAL 2508) (Peptostreptococcus magnus).